We begin with the raw amino-acid sequence, 610 residues long: MTDSFNAKQFLSTVTSQPGVYSMYDLSGTVIYVGKAKDLKKRLASYFRAQVASRKTEALVKSIHHIDVTITHTETEALLLEHNYIKLYQPRYNVLLRDDKSYPFIFLSGDAHPRITSHRGAKHAKGDYFGPFPNGYAVKETLALLQKLFPIRQCEDSVYRNRSRPCLQYQIGRCLGPCVAGLVSDEEYQQQVEYVRLFLSGKDQQVLNQLVERMELASRALNFEDAAHARDQIQAVRRVTEKQFVSGDREDLDVIGVSFDAGMACVHVLFIRQGKVLGSRSYFPKVPVGTELAEVVQTFVGQFYLQGSQMRSLPGEILLDFTLPEKTLLAASLSEQAGRKIQIQTQPRGDRARYLKLARTNAATALVTKLSQQSTVHQRLAALAELLGIQAINRMECFDISHTMGEHTIASCVIFDGNGSVRAEYRRYNIEGITPGDDYAAMDQVLRRRYGKALEEKKIPDVVIIDGGKGQLGMAKAVFEQLEVPWDKSRVVLLGVAKGVDRKAGLETLFLQPHGEGMALPPDSPALHVIQHIRDDSHNHAITGHRNKRAKVKNTSALELIEGVGPRRRQSLLKYMGGLQPLRNASVEEIAQVPGISGALAEKIFNALKH.

Residues 16 to 94 form the GIY-YIG domain; the sequence is SQPGVYSMYD…IKLYQPRYNV (79 aa). The region spanning 204–239 is the UVR domain; sequence QQVLNQLVERMELASRALNFEDAAHARDQIQAVRRV.

Belongs to the UvrC family. Interacts with UvrB in an incision complex.

The protein resides in the cytoplasm. Its function is as follows. The UvrABC repair system catalyzes the recognition and processing of DNA lesions. UvrC both incises the 5' and 3' sides of the lesion. The N-terminal half is responsible for the 3' incision and the C-terminal half is responsible for the 5' incision. The sequence is that of UvrABC system protein C from Sodalis glossinidius (strain morsitans).